Here is a 682-residue protein sequence, read N- to C-terminus: Homeobox-leucine zipper protein HDG7 (682 aa).

Residues 33-65 (LSDDSFDAMSGDEDKQEQRPKKKKRKTKYHRHT) are disordered. The span at 52-65 (PKKKKRKTKYHRHT) shows a compositional bias: basic residues. Residues 57-116 (RKTKYHRHTSYQIQELESFFKECPHPNEKQRLELGKKLTLESKQIKFWFQNRRTQMKTQL) constitute a DNA-binding region (homeobox). The stretch at 105-186 (FQNRRTQMKT…LDRICALANR (82 aa)) forms a coiled coil. Residues 214–429 (SGGTSLMFMD…LQRQCESFTM (216 aa)) form the START domain.

Belongs to the HD-ZIP homeobox family. Class IV subfamily. Interacts with AIL7/PLT7. In terms of tissue distribution, expressed in cells around the base of leaf primordia, in the outermost 2 to 3 cell layers along the boundary between two leaf primordia. Expressed in lateral root primordia and tips, and in the epidermal boundaries of two cotyledons at heart-stage embryo.

Its subcellular location is the nucleus. Its function is as follows. Probable transcription factor that binds to the DNA sequence 5'-GCATTAAATGC-3'. Seems to promote cell differentiation. This chain is Homeobox-leucine zipper protein HDG7, found in Arabidopsis thaliana (Mouse-ear cress).